A 612-amino-acid polypeptide reads, in one-letter code: Chaperone protein DnaK (612 aa).

Threonine 173 is subject to Phosphothreonine; by autocatalysis. Positions 576-612 (AAKQAQAQQDGGAGAKKADDNVVDAEYEEVNDDKDQK) are disordered. The segment covering 596–612 (NVVDAEYEEVNDDKDQK) has biased composition (acidic residues).

The protein belongs to the heat shock protein 70 family.

Functionally, acts as a chaperone. This Bacillus licheniformis (strain ATCC 14580 / DSM 13 / JCM 2505 / CCUG 7422 / NBRC 12200 / NCIMB 9375 / NCTC 10341 / NRRL NRS-1264 / Gibson 46) protein is Chaperone protein DnaK.